Consider the following 482-residue polypeptide: G2/mitotic-specific cyclin cdc13 (482 aa).

3 stretches are compositionally biased toward polar residues: residues 35 to 55 (LHSSENSLVNGKKATVSSTNV), 78 to 92 (SKNTNVRHTTASVST), and 118 to 140 (SVFNSSVPSLPQHLSTKSHSVST). A disordered region spans residues 35-140 (LHSSENSLVN…LSTKSHSVST (106 aa)). The Cyclin N-terminal domain occupies 206–332 (DIFEYLNELE…ILRVLEFNLA (127 aa)).

It belongs to the cyclin family. Cyclin AB subfamily. As to quaternary structure, interacts with cdc2. Interacts with rum1. Associates with microtubules. Also interacts with cdc11.

Its subcellular location is the nucleus. It localises to the cytoplasm. The protein resides in the cytoskeleton. It is found in the microtubule organizing center. The protein localises to the spindle pole body. Its function is as follows. Essential for the control of the cell cycle at the G2/M (mitosis) transition. Interacts with the cdc2 protein kinase to form MPF. G2/M cyclins accumulate steadily during G2 and are abruptly destroyed at mitosis. Involved in the reorganization of the cytoskeleton on transition from G2 to mitosis. Association with rum1 promotes its proteolysis during G1. Also essential for initiation of meiosis II. This Schizosaccharomyces pombe (strain 972 / ATCC 24843) (Fission yeast) protein is G2/mitotic-specific cyclin cdc13.